The sequence spans 145 residues: MIGLIQRVERASVCVEGKEIGAIDRGLLVFVGIERADSAQQAEKLAQKLLNYRVFEDELGKMNLNVQQIGGELLLVSQFTLAANTQKGNRPSFDPAMAPQEAEPLFDYFCQTVHTHYPHTATGRFGADMRVHLINDGPVTFWLHV.

The Gly-cisPro motif, important for rejection of L-amino acids motif lies at 137–138 (GP).

This sequence belongs to the DTD family. In terms of assembly, homodimer.

It localises to the cytoplasm. It carries out the reaction glycyl-tRNA(Ala) + H2O = tRNA(Ala) + glycine + H(+). It catalyses the reaction a D-aminoacyl-tRNA + H2O = a tRNA + a D-alpha-amino acid + H(+). Its function is as follows. An aminoacyl-tRNA editing enzyme that deacylates mischarged D-aminoacyl-tRNAs. Also deacylates mischarged glycyl-tRNA(Ala), protecting cells against glycine mischarging by AlaRS. Acts via tRNA-based rather than protein-based catalysis; rejects L-amino acids rather than detecting D-amino acids in the active site. By recycling D-aminoacyl-tRNA to D-amino acids and free tRNA molecules, this enzyme counteracts the toxicity associated with the formation of D-aminoacyl-tRNA entities in vivo and helps enforce protein L-homochirality. This Dichelobacter nodosus (strain VCS1703A) protein is D-aminoacyl-tRNA deacylase.